Here is a 323-residue protein sequence, read N- to C-terminus: Deaminated glutathione amidase (323 aa).

A mitochondrion-targeting transit peptide spans 1 to 33 (MLGFITRPPHQLLCTGYRLLRTPVLCTQPRPRT). In terms of domain architecture, CN hydrolase spans 42-294 (LPLVAVCQVT…PGLCLARIDL (253 aa)). E82 (proton acceptor) is an active-site residue. Residue K157 is the Proton donor of the active site. C199 (nucleophile) is an active-site residue.

It belongs to the carbon-nitrogen hydrolase superfamily. NIT1/NIT2 family. In terms of tissue distribution, expressed in most tissues with higher expression in adult liver and kidney as well as in fetal adrenal gland and skeletal muscle.

It localises to the mitochondrion. It is found in the cytoplasm. The catalysed reaction is N-(4-oxoglutaryl)-L-cysteinylglycine + H2O = L-cysteinylglycine + 2-oxoglutarate. It catalyses the reaction N-(4-carboxy-4-oxobutanoyl)-L-ethylglycylglycine + H2O = N-(2-aminobutanoyl)glycine + 2-oxoglutarate. Its function is as follows. Catalyzes the hydrolysis of the amide bond in N-(4-oxoglutarate)-L-cysteinylglycine (deaminated glutathione), a metabolite repair reaction to dispose of the harmful deaminated glutathione. Possesses amidase activity toward deaminated ophthalmate in vitro. Plays a role in cell growth and apoptosis: loss of expression promotes cell growth, resistance to DNA damage stress and increased incidence to NMBA-induced tumors. Has tumor suppressor properties that enhances the apoptotic responsiveness in cancer cells; this effect is additive to the tumor suppressor activity of FHIT. It is also a negative regulator of primary T-cells. The sequence is that of Deaminated glutathione amidase from Mus musculus (Mouse).